Here is a 128-residue protein sequence, read N- to C-terminus: L-ectoine synthase (128 aa).

This sequence belongs to the ectoine synthase family.

It carries out the reaction (2S)-4-acetamido-2-aminobutanoate = L-ectoine + H2O. Its pathway is amine and polyamine biosynthesis; ectoine biosynthesis; L-ectoine from L-aspartate 4-semialdehyde: step 3/3. Its function is as follows. Catalyzes the circularization of gamma-N-acetyl-alpha,gamma-diaminobutyric acid (ADABA) to ectoine (1,4,5,6-tetrahydro-2-methyl-4-pyrimidine carboxylic acid), which is an excellent osmoprotectant. This is L-ectoine synthase from Vibrio parahaemolyticus serotype O3:K6 (strain RIMD 2210633).